Reading from the N-terminus, the 326-residue chain is DNA-directed RNA polymerase subunit alpha (326 aa).

Positions 1 to 232 are alpha N-terminal domain (alpha-NTD); that stretch reads MQGSARDFLK…EQLSSFVELE (232 aa). The interval 246 to 326 is alpha C-terminal domain (alpha-CTD); sequence FDPQLLAAVD…NWPPVDLMSE (81 aa).

This sequence belongs to the RNA polymerase alpha chain family. In terms of assembly, homodimer. The RNAP catalytic core consists of 2 alpha, 1 beta, 1 beta' and 1 omega subunit. When a sigma factor is associated with the core the holoenzyme is formed, which can initiate transcription.

It carries out the reaction RNA(n) + a ribonucleoside 5'-triphosphate = RNA(n+1) + diphosphate. Its function is as follows. DNA-dependent RNA polymerase catalyzes the transcription of DNA into RNA using the four ribonucleoside triphosphates as substrates. The polypeptide is DNA-directed RNA polymerase subunit alpha (Vesicomyosocius okutanii subsp. Calyptogena okutanii (strain HA)).